A 514-amino-acid polypeptide reads, in one-letter code: 2,3-bisphosphoglycerate-independent phosphoglycerate mutase (514 aa).

Mn(2+) contacts are provided by aspartate 14 and serine 64. The active-site Phosphoserine intermediate is the serine 64. Residues histidine 125, 155-156, arginine 187, arginine 193, 263-266, and lysine 336 each bind substrate; these read RD and RADR. Aspartate 403, histidine 407, aspartate 444, histidine 445, and histidine 463 together coordinate Mn(2+).

The protein belongs to the BPG-independent phosphoglycerate mutase family. Monomer. Mn(2+) is required as a cofactor.

The enzyme catalyses (2R)-2-phosphoglycerate = (2R)-3-phosphoglycerate. The protein operates within carbohydrate degradation; glycolysis; pyruvate from D-glyceraldehyde 3-phosphate: step 3/5. Functionally, catalyzes the interconversion of 2-phosphoglycerate and 3-phosphoglycerate. The sequence is that of 2,3-bisphosphoglycerate-independent phosphoglycerate mutase from Shewanella baltica (strain OS195).